The primary structure comprises 395 residues: Succinyl-diaminopimelate desuccinylase (395 aa).

Residue histidine 74 participates in Zn(2+) binding. The active site involves aspartate 76. Aspartate 107 provides a ligand contact to Zn(2+). Glutamate 141 serves as the catalytic Proton acceptor. Zn(2+)-binding residues include glutamate 142, glutamate 170, and histidine 368.

It belongs to the peptidase M20A family. DapE subfamily. As to quaternary structure, homodimer. Zn(2+) is required as a cofactor. The cofactor is Co(2+).

The catalysed reaction is N-succinyl-(2S,6S)-2,6-diaminopimelate + H2O = (2S,6S)-2,6-diaminopimelate + succinate. It participates in amino-acid biosynthesis; L-lysine biosynthesis via DAP pathway; LL-2,6-diaminopimelate from (S)-tetrahydrodipicolinate (succinylase route): step 3/3. Catalyzes the hydrolysis of N-succinyl-L,L-diaminopimelic acid (SDAP), forming succinate and LL-2,6-diaminopimelate (DAP), an intermediate involved in the bacterial biosynthesis of lysine and meso-diaminopimelic acid, an essential component of bacterial cell walls. In Brucella abortus (strain S19), this protein is Succinyl-diaminopimelate desuccinylase.